Consider the following 274-residue polypeptide: Purine nucleoside phosphorylase 1 (274 aa).

Residues S29, H60, 80–82, and A112 each bind phosphate; that span reads RFH. S29 is modified (phosphoserine). E192 contacts a purine D-ribonucleoside. S211 is a phosphate binding site. Residue N234 coordinates a purine D-ribonucleoside.

Belongs to the PNP/MTAP phosphorylase family. As to quaternary structure, homotrimer.

It catalyses the reaction a purine D-ribonucleoside + phosphate = a purine nucleobase + alpha-D-ribose 1-phosphate. The catalysed reaction is a purine 2'-deoxy-D-ribonucleoside + phosphate = a purine nucleobase + 2-deoxy-alpha-D-ribose 1-phosphate. It functions in the pathway purine metabolism; purine nucleoside salvage. Its function is as follows. The purine nucleoside phosphorylases catalyze the phosphorolytic breakdown of the N-glycosidic bond in the beta-(deoxy)ribonucleoside molecules, with the formation of the corresponding free purine bases and pentose-1-phosphate. Cleaves guanosine, inosine, 2'-deoxyguanosine and 2'-deoxyinosine. This Geobacillus stearothermophilus (Bacillus stearothermophilus) protein is Purine nucleoside phosphorylase 1 (punA).